The following is a 599-amino-acid chain: Exocyst complex component EXO70B2 (599 aa).

The disordered stretch occupies residues 38 to 58 (GASGNRGGDPRPTPSRGGSNV).

It belongs to the EXO70 family. Self interacts. Interacts with EXO70B1. Interacts with the exocyst subunits EXO70H1, SEC5A and SEC15B. Binds to SNAP33. Subunit of the exocyst complex that mediates vesicle tethering during exocytosis. Binds to PUB22. Post-translationally, target of the E3 ubiquitin-protein ligase PUB22 that mediates its ubiquitination and degradation via the 26S proteasome to attenuate pathogen-associated molecular patterns (PAMP)-induced signaling, especially is response to the bacterial elicitor flg22. As to expression, mostly expressed in leaves and, to a lower extent, in roots, cotyledons, internodes, flower buds, siliques and anthers.

It localises to the cytoplasmic vesicle. The protein resides in the phagosome. Its subcellular location is the cytoplasm. It is found in the nucleus. Functionally, component of an exocyst subcomplex specifically involved in autophagy-related, Golgi-independent membrane traffic to the vacuole. Regulates autophagosome formation and autophagy-related Golgi-independent import into the vacuole. Positive regulator of defense responses to pathogenic bacteria (e.g. P.syringae pv. maculicola), to the biotrophic oomycete H.arabidopsidis and to fungi (e.g. B.graminis hordei), especially in cell wall apposition formation related to plant defense. Required for both immediate and later responses triggered by pathogen-associated molecular patterns (PAMPs). Positive regulator of abscisic acid (ABA)-independent mannitol (drought)-promoted stomatal closure. This chain is Exocyst complex component EXO70B2, found in Arabidopsis thaliana (Mouse-ear cress).